A 98-amino-acid polypeptide reads, in one-letter code: Putative septation protein SpoVG (98 aa).

The protein belongs to the SpoVG family.

Functionally, could be involved in septation. The polypeptide is Putative septation protein SpoVG (Alkaliphilus metalliredigens (strain QYMF)).